The chain runs to 159 residues: Ribosome maturation factor RimP (159 aa).

Belongs to the RimP family.

It localises to the cytoplasm. Required for maturation of 30S ribosomal subunits. In Geobacter sulfurreducens (strain ATCC 51573 / DSM 12127 / PCA), this protein is Ribosome maturation factor RimP.